Here is a 505-residue protein sequence, read N- to C-terminus: Maturase K (505 aa).

It belongs to the intron maturase 2 family. MatK subfamily.

The protein resides in the plastid. It localises to the chloroplast. Functionally, usually encoded in the trnK tRNA gene intron. Probably assists in splicing its own and other chloroplast group II introns. This is Maturase K from Calycanthus occidentalis (Spice bush).